The sequence spans 205 residues: LexA repressor (205 aa).

The segment at residues 28 to 48 (RAEIAHKLGFRSANSAEEHLK) is a DNA-binding region (H-T-H motif). Residues serine 122 and lysine 159 each act as for autocatalytic cleavage activity in the active site.

It belongs to the peptidase S24 family. In terms of assembly, homodimer.

It catalyses the reaction Hydrolysis of Ala-|-Gly bond in repressor LexA.. Its function is as follows. Represses a number of genes involved in the response to DNA damage (SOS response), including recA and lexA. In the presence of single-stranded DNA, RecA interacts with LexA causing an autocatalytic cleavage which disrupts the DNA-binding part of LexA, leading to derepression of the SOS regulon and eventually DNA repair. This Idiomarina loihiensis (strain ATCC BAA-735 / DSM 15497 / L2-TR) protein is LexA repressor.